Consider the following 299-residue polypeptide: B-box zinc finger protein 22 (299 aa).

Zn(2+) is bound by residues cysteine 5, cysteine 8, cysteine 28, histidine 33, cysteine 57, cysteine 60, cysteine 80, and histidine 85. The B box-type 1; atypical zinc-finger motif lies at 5–47; that stretch reads CNVCEAAEATVLCCADEAALCWACDEKIHAANKLAGKHQRVPL. A B box-type 2; atypical zinc finger spans residues 57 to 99; sequence CDICQEASGFFFCLQDRALLCRKCDVAIHTVNPHVSAHQRFLL. Disordered stretches follow at residues 143-181 and 206-299; these read FDHHHHQQQQEQQEGVIPGTKVNDQTSTKLPLVSSGSTT and ENNG…RRRF. Composition is skewed to polar residues over residues 164–181, 251–260, and 277–290; these read VNDQTSTKLPLVSSGSTT, QIQSPPTASG, and ITSSTPYTGSSPNQ.

Interacts with HY5. Post-translationally, ubiquitinated by COP1 in vitro. COP1-mediated degradation of BBX22 by the proteasome occurs in the dark and is important for a precise skotomorphogenesis process and optimization of seedling growth under short days conditions.

It localises to the nucleus. Functionally, acts as a positive regulator of seedling photomorphogenesis and light-regulated inhibition of hypocotyl elongation, independently and in concert with HY5 and BBX21. Acts as a positive regulator of de-etiolation and influences chloroplast biogenesis and function through regulation of genes encoding chloroplast proteins. Acts downstream of COP1 and plays an important role in early and long-term adjustment of the shade avoidance syndrome (SAS) responses in natural environments. Regulates the expression of genes responsive to light hormone signals which may contribute to optimal seedling development. The protein is B-box zinc finger protein 22 of Arabidopsis thaliana (Mouse-ear cress).